The chain runs to 164 residues: Transcription elongation factor GreA (164 aa).

The protein belongs to the GreA/GreB family.

Its function is as follows. Necessary for efficient RNA polymerase transcription elongation past template-encoded arresting sites. The arresting sites in DNA have the property of trapping a certain fraction of elongating RNA polymerases that pass through, resulting in locked ternary complexes. Cleavage of the nascent transcript by cleavage factors such as GreA or GreB allows the resumption of elongation from the new 3'terminus. GreA releases sequences of 2 to 3 nucleotides. The chain is Transcription elongation factor GreA from Helicobacter pylori (strain J99 / ATCC 700824) (Campylobacter pylori J99).